The chain runs to 94 residues: Small ribosomal subunit protein uS19 (94 aa).

The disordered stretch occupies residues 75 to 94 (SHTRTFKGHAGDKKAAGSKR). The span at 83–94 (HAGDKKAAGSKR) shows a compositional bias: basic and acidic residues.

This sequence belongs to the universal ribosomal protein uS19 family.

Its function is as follows. Protein S19 forms a complex with S13 that binds strongly to the 16S ribosomal RNA. The protein is Small ribosomal subunit protein uS19 of Nitrosomonas europaea (strain ATCC 19718 / CIP 103999 / KCTC 2705 / NBRC 14298).